The following is a 278-amino-acid chain: Reaction center protein L chain (278 aa).

A run of 3 helical transmembrane segments spans residues 33-56 (GFFG…GATI), 90-118 (GLWQ…RKLG), and 121-146 (FHIP…ILMG). His159 and His179 together coordinate (7R,8Z)-bacteriochlorophyll b. A helical transmembrane segment spans residues 176-205 (NPAHMLAITFFFTNCLALSMHGSLILSVTN). His196 serves as a coordination point for Fe cation. Phe222 is an a ubiquinone binding site. The chain crosses the membrane as a helical span at residues 231–257 (GALAIHRLGLFLALSAVFWSAVCIVIS). Residue His236 participates in Fe cation binding.

It belongs to the reaction center PufL/M/PsbA/D family. As to quaternary structure, reaction center is composed of four bacteriochlorophylls, two bacteriopheophytins, two ubiquinones, one iron, and two highly hydrophobic polypeptide chains (designated L and M).

The protein localises to the cellular chromatophore membrane. Its function is as follows. The reaction center is a membrane-bound complex that mediates the initial photochemical event in the electron transfer process of photosynthesis. This Allochromatium vinosum (strain ATCC 17899 / DSM 180 / NBRC 103801 / NCIMB 10441 / D) (Chromatium vinosum) protein is Reaction center protein L chain (pufL).